Consider the following 955-residue polypeptide: Auxin response factor 11 (955 aa).

A DNA-binding region (TF-B3) is located at residues 143–245 (FCKNLTASDT…QLLLGVRRAT (103 aa)). A compositionally biased stretch (polar residues) spans 518 to 543 (ESKLNATSRDPRNTDSYTSRSTSEQN). Disordered stretches follow at residues 518–573 (ESKL…LSSA) and 609–646 (TQGN…KSVN). A compositionally biased stretch (basic residues) spans 551–560 (KTRRSKKGLP). Residues 852-936 (RTYTKVQKQG…RCIRILSPSE (85 aa)) form the PB1 domain.

The protein belongs to the ARF family. As to quaternary structure, homodimers and heterodimers.

The protein localises to the nucleus. Functionally, auxin response factors (ARFs) are transcriptional factors that bind specifically to the DNA sequence 5'-TGTCTC-3' found in the auxin-responsive promoter elements (AuxREs). This is Auxin response factor 11 (ARF11) from Oryza sativa subsp. indica (Rice).